A 192-amino-acid polypeptide reads, in one-letter code: MKIGVLALQGAVREHLRHIELSGHEGVSVKRVEQLEEIDGLILPGGESTTLRRLMNLYGFKEALVNSDLPMFGTCAGLIVLAQDIVGEEGYLQKLDITVERNSFGRQVDSFEAELDIKGIANDIEAVFIRAPHIEKVNSDNVEILSTVDDKIVAVKEGNYLGVSFHPELTDDYRVTQYFIDHIVAEHKHAAV.

Position 46–48 (46–48) interacts with L-glutamine; sequence GES. C75 (nucleophile) is an active-site residue. L-glutamine is bound by residues R101 and 129–130; that span reads IR. Catalysis depends on charge relay system residues H166 and E168.

This sequence belongs to the glutaminase PdxT/SNO family. As to quaternary structure, in the presence of PdxS, forms a dodecamer of heterodimers. Only shows activity in the heterodimer.

The catalysed reaction is aldehydo-D-ribose 5-phosphate + D-glyceraldehyde 3-phosphate + L-glutamine = pyridoxal 5'-phosphate + L-glutamate + phosphate + 3 H2O + H(+). The enzyme catalyses L-glutamine + H2O = L-glutamate + NH4(+). It participates in cofactor biosynthesis; pyridoxal 5'-phosphate biosynthesis. Catalyzes the hydrolysis of glutamine to glutamate and ammonia as part of the biosynthesis of pyridoxal 5'-phosphate. The resulting ammonia molecule is channeled to the active site of PdxS. The protein is Pyridoxal 5'-phosphate synthase subunit PdxT of Staphylococcus carnosus (strain TM300).